A 50-amino-acid polypeptide reads, in one-letter code: Light-harvesting protein B-880 alpha chain (50 aa).

The Cytoplasmic portion of the chain corresponds to 1-12; that stretch reads MYKLWLLFDPRR. A helical transmembrane segment spans residues 13 to 33; it reads ALVALSAFLFVLALIIHFIAL. H29 is a binding site for a bacteriochlorophyll. At 34-50 the chain is on the periplasmic side; it reads STDRFNWLEGKPAVKAA.

It belongs to the antenna complex alpha subunit family. The core complex is formed by different alpha and beta chains, binding bacteriochlorophyll molecules, and arranged most probably in tetrameric structures disposed around the reaction center. The non-pigmented gamma chains may constitute additional components.

It localises to the cell inner membrane. In terms of biological role, antenna complexes are light-harvesting systems, which transfer the excitation energy to the reaction centers. This is Light-harvesting protein B-880 alpha chain from Rhodoblastus acidophilus (Rhodopseudomonas acidophila).